Here is a 319-residue protein sequence, read N- to C-terminus: MATTKPYRVLLYYMYTTIENPEEFAAEHLAFCNSLELKGRILVAKEGINGTCSGTVEQTEKYMEAMNNDPRFDGIVFKIDEADGHAFKKMHVRPRPELVTLRLEDDINPHEITGKYLEPKDFYEAMKQEDTVIIDARNDYEFDLGHFKGAIKPDIESFRELPDWIRENKEVLEGKKILTYCTGGIRCEKFSGWLVREGYEDVSQLHGGIVTYGKDPEVQGELWDGQCYVFDERIAVPVNQKEHVIVGKDHFTGEPCERYVNCANPECNKKILCSEENEAKYLRACSHECRVSPRNRYVIQHELTEEQVAAALEKIEAGK.

In terms of domain architecture, Rhodanese spans K127–E221. The active-site Cysteine persulfide intermediate is C181.

The protein belongs to the TrhO family.

The catalysed reaction is uridine(34) in tRNA + AH2 + O2 = 5-hydroxyuridine(34) in tRNA + A + H2O. Functionally, catalyzes oxygen-dependent 5-hydroxyuridine (ho5U) modification at position 34 in tRNAs. The protein is tRNA uridine(34) hydroxylase of Bacillus thuringiensis (strain Al Hakam).